The primary structure comprises 549 residues: MLRRLAPLLAEFNFVPLVSKVSHKETKYRLLTKDYVSVVQPGAGLPEMLRVDPAALTLLSSTAFDDVEHLLRSSHLMSLRKIFDDPEASDNDKFVALQLLKNANISSARLLPGCQDTGTAIIAGYRGDQVFVPGNDEEALSRGVYDIFQKRNFRYSQNVPLSMYDEKNTGTNLPAQIDLYASKGMEYSFMFVAKGGGSANKSFLLQETKSVLNPKSLRNFLKEKLAMFGTSACPPYHVAVVIGGTSAEMTMKVLKYASCHYYDDLITKPDMKTGYTFRDLELEEEVLKVCQNIGMGAQFGGKYYAHDVRVIRMPRHGASCPIGIGVSCSADRQALGKINKDGVWLEELEMEPSQYLPDLKEDELLKTPAVMVNLNRPMPEVLQELSKHPVRTRLSLTGTIIVARDSAHARMREMLEAGKPLPQYMKEHPVYYAGPAKQPDGLPSGSFGPTTAGRMDPFVDLFQSHGGSMVMLAKGNRSKQVTKACHKYGGFYLGSIGGPAAVLAQNAIKKVECLDMKDLGMEAVWRIEVENFPAFIVVDDKGNDFFEQL.

Cysteine 114 contacts [4Fe-4S] cluster. (S)-malate is bound by residues 115–116 (QD), arginine 154, glycine 197, and 200–206 (NKSFLLQ). Cysteine 233 and cysteine 328 together coordinate [4Fe-4S] cluster. (S)-malate-binding positions include arginine 404, 450–454 (TTAGR), and lysine 474.

This sequence belongs to the class-I fumarase family. In terms of assembly, homodimer. [4Fe-4S] cluster is required as a cofactor.

The protein resides in the mitochondrion. The catalysed reaction is (S)-malate = fumarate + H2O. It functions in the pathway carbohydrate metabolism; tricarboxylic acid cycle; (S)-malate from fumarate: step 1/1. Specifically and competitively inhibited by 2-thiomalate, which coordinates with the catalytic [4Fe-4S] cluster. Catalyzes the reversible hydration of fumarate to (S)-malate. Catalyzes the hydration of fumarate to L-malate in the tricarboxylic acid (TCA) cycle to facilitate a transition step in the production of energy in the form of NADH. In Leishmania major, this protein is Fumarate hydratase 1, mitochondrial.